Here is a 144-residue protein sequence, read N- to C-terminus: Large ribosomal subunit protein uL11 (144 aa).

Belongs to the universal ribosomal protein uL11 family. As to quaternary structure, part of the ribosomal stalk of the 50S ribosomal subunit. Interacts with L10 and the large rRNA to form the base of the stalk. L10 forms an elongated spine to which L12 dimers bind in a sequential fashion forming a multimeric L10(L12)X complex. Post-translationally, one or more lysine residues are methylated.

Forms part of the ribosomal stalk which helps the ribosome interact with GTP-bound translation factors. This is Large ribosomal subunit protein uL11 from Neisseria meningitidis serogroup A / serotype 4A (strain DSM 15465 / Z2491).